We begin with the raw amino-acid sequence, 361 residues long: DNA replication and repair protein RecF (361 aa).

30 to 37 (GANGSGKT) is a binding site for ATP.

This sequence belongs to the RecF family.

It is found in the cytoplasm. The RecF protein is involved in DNA metabolism; it is required for DNA replication and normal SOS inducibility. RecF binds preferentially to single-stranded, linear DNA. It also seems to bind ATP. This chain is DNA replication and repair protein RecF, found in Pectobacterium atrosepticum (strain SCRI 1043 / ATCC BAA-672) (Erwinia carotovora subsp. atroseptica).